Here is a 289-residue protein sequence, read N- to C-terminus: ATP synthase gamma chain (289 aa).

This sequence belongs to the ATPase gamma chain family. In terms of assembly, F-type ATPases have 2 components, CF(1) - the catalytic core - and CF(0) - the membrane proton channel. CF(1) has five subunits: alpha(3), beta(3), gamma(1), delta(1), epsilon(1). CF(0) has three main subunits: a, b and c.

It localises to the cell inner membrane. Functionally, produces ATP from ADP in the presence of a proton gradient across the membrane. The gamma chain is believed to be important in regulating ATPase activity and the flow of protons through the CF(0) complex. The protein is ATP synthase gamma chain of Cereibacter sphaeroides (strain ATCC 17029 / ATH 2.4.9) (Rhodobacter sphaeroides).